The sequence spans 476 residues: Proline--tRNA ligase 2 (476 aa).

This sequence belongs to the class-II aminoacyl-tRNA synthetase family. ProS type 3 subfamily. Homodimer.

The protein resides in the cytoplasm. The enzyme catalyses tRNA(Pro) + L-proline + ATP = L-prolyl-tRNA(Pro) + AMP + diphosphate. Functionally, catalyzes the attachment of proline to tRNA(Pro) in a two-step reaction: proline is first activated by ATP to form Pro-AMP and then transferred to the acceptor end of tRNA(Pro). The polypeptide is Proline--tRNA ligase 2 (Bacillus thuringiensis (strain Al Hakam)).